Here is a 323-residue protein sequence, read N- to C-terminus: Malate dehydrogenase (323 aa).

Residues 20–25 (GAGRVG) and aspartate 44 contribute to the NAD(+) site. Substrate contacts are provided by arginine 93 and arginine 99. Residues asparagine 106 and 129-131 (VTN) contribute to the NAD(+) site. Substrate is bound by residues asparagine 131 and arginine 162. The active-site Proton acceptor is histidine 186.

It belongs to the LDH/MDH superfamily. MDH type 3 family.

The enzyme catalyses (S)-malate + NAD(+) = oxaloacetate + NADH + H(+). Catalyzes the reversible oxidation of malate to oxaloacetate. This is Malate dehydrogenase from Nostoc sp. (strain PCC 7120 / SAG 25.82 / UTEX 2576).